The sequence spans 549 residues: Coiled-coil domain-containing protein 102A (549 aa).

Disordered stretches follow at residues 1-61, 135-195, and 207-248; these read MSHG…TAPA, LAGA…GSQE, and PEEP…EEDA. Phosphoserine is present on residues serine 12, serine 26, and serine 28. The segment covering 37-55 has biased composition (pro residues); the sequence is SLPPTPPSGTPSPGPPPSL. The stretch at 69-160 forms a coiled coil; sequence ESREELRLRE…ARGRELARLR (92 aa). Basic and acidic residues-rich tracts occupy residues 135-158 and 165-187; these read LAGA…ELAR and AADK…DIGA. Coiled coils occupy residues 263 to 398 and 426 to 517; these read KVLL…NASA and KLKK…NAPL. Disordered regions lie at residues 472–496 and 509–549; these read ELDE…QSEN and RRQQ…IQVA. Acidic residues predominate over residues 530-549; it reads EAGDGASDLDEDEDLQIQVA. Serine 536 carries the phosphoserine modification.

The protein is Coiled-coil domain-containing protein 102A (Ccdc102a) of Mus musculus (Mouse).